A 362-amino-acid chain; its full sequence is Histidinol-phosphate aminotransferase (362 aa).

Lys222 bears the N6-(pyridoxal phosphate)lysine mark.

Belongs to the class-II pyridoxal-phosphate-dependent aminotransferase family. Histidinol-phosphate aminotransferase subfamily. In terms of assembly, homodimer. Pyridoxal 5'-phosphate is required as a cofactor.

The enzyme catalyses L-histidinol phosphate + 2-oxoglutarate = 3-(imidazol-4-yl)-2-oxopropyl phosphate + L-glutamate. Its pathway is amino-acid biosynthesis; L-histidine biosynthesis; L-histidine from 5-phospho-alpha-D-ribose 1-diphosphate: step 7/9. In Shewanella amazonensis (strain ATCC BAA-1098 / SB2B), this protein is Histidinol-phosphate aminotransferase.